The chain runs to 211 residues: Protein-L-isoaspartate O-methyltransferase (211 aa).

Serine 62 is a catalytic residue.

It belongs to the methyltransferase superfamily. L-isoaspartyl/D-aspartyl protein methyltransferase family.

It is found in the cytoplasm. The catalysed reaction is [protein]-L-isoaspartate + S-adenosyl-L-methionine = [protein]-L-isoaspartate alpha-methyl ester + S-adenosyl-L-homocysteine. Its function is as follows. Catalyzes the methyl esterification of L-isoaspartyl residues in peptides and proteins that result from spontaneous decomposition of normal L-aspartyl and L-asparaginyl residues. It plays a role in the repair and/or degradation of damaged proteins. This Shewanella sp. (strain ANA-3) protein is Protein-L-isoaspartate O-methyltransferase.